An 88-amino-acid chain; its full sequence is Large ribosomal subunit protein bL27 (88 aa).

The disordered stretch occupies residues 1-26; that stretch reads MAHKKGASSSSNGRDSEAKRLGVKRF.

It belongs to the bacterial ribosomal protein bL27 family.

The polypeptide is Large ribosomal subunit protein bL27 (Corynebacterium glutamicum (strain R)).